The primary structure comprises 105 residues: Cell division protein FtsL (105 aa).

Over 1-24 (MAEKMEKTGQILQMQLKRFSRVEK) the chain is Cytoplasmic. The helical transmembrane segment at 25 to 45 (AFYFSIAVTTLIVAISIIFMQ) threads the bilayer. At 46-105 (TKLLQVQNDLTKINAQIEEKKTELDDAKQEVNELLRAERLKEIANSHDLQLNNENIRIAE) the chain is on the extracellular side.

It belongs to the FtsL family.

The protein resides in the cell membrane. Essential cell division protein. In Streptococcus pneumoniae (strain ATCC BAA-255 / R6), this protein is Cell division protein FtsL.